Here is a 322-residue protein sequence, read N- to C-terminus: NADH-quinone oxidoreductase subunit H (322 aa).

8 consecutive transmembrane segments (helical) span residues 15–35, 81–101, 114–134, 149–169, 184–204, 237–257, 265–285, and 299–319; these read IFQSIVILVCVLITASIMSVV, ITFLIAPILAFISLLLVITII, IGVLFFLMMASLSVYSVLLAG, ATAQTLSYEVFLGLSCMGVVA, IGLWNIIPQFFGFLAFFIAGL, FFIGEYISIIVVSSLISTMFF, FPSYFWFILKTLCFMMIFILI, and LFGWKVCFPLTLINLIFTALI.

This sequence belongs to the complex I subunit 1 family. In terms of assembly, NDH-1 is composed of 13 different subunits. Subunits NuoA, H, J, K, L, M, N constitute the membrane sector of the complex.

Its subcellular location is the cell membrane. It catalyses the reaction a quinone + NADH + 5 H(+)(in) = a quinol + NAD(+) + 4 H(+)(out). In terms of biological role, NDH-1 shuttles electrons from NADH, via FMN and iron-sulfur (Fe-S) centers, to quinones in the respiratory chain. The immediate electron acceptor for the enzyme in this species is believed to be ubiquinone. Couples the redox reaction to proton translocation (for every two electrons transferred, four hydrogen ions are translocated across the cytoplasmic membrane), and thus conserves the redox energy in a proton gradient. This subunit may bind ubiquinone. This is NADH-quinone oxidoreductase subunit H from Buchnera aphidicola subsp. Baizongia pistaciae (strain Bp).